A 79-amino-acid chain; its full sequence is Acyl carrier protein (79 aa).

Residues 1-77 form the Carrier domain; the sequence is MNNVEKKIKK…KSIDYINNKN (77 aa). Residue Ser-37 is modified to O-(pantetheine 4'-phosphoryl)serine.

The protein belongs to the acyl carrier protein (ACP) family. 4'-phosphopantetheine is transferred from CoA to a specific serine of apo-ACP by AcpS. This modification is essential for activity because fatty acids are bound in thioester linkage to the sulfhydryl of the prosthetic group.

The protein localises to the cytoplasm. It participates in lipid metabolism; fatty acid biosynthesis. Carrier of the growing fatty acid chain in fatty acid biosynthesis. In Buchnera aphidicola subsp. Schizaphis graminum (strain Sg), this protein is Acyl carrier protein.